A 412-amino-acid chain; its full sequence is Tyrosine--tRNA ligase (412 aa).

L-tyrosine is bound at residue tyrosine 31. The 'HIGH' region signature appears at 36 to 45 (PTAASLHIGH). Tyrosine 162 and glutamine 166 together coordinate L-tyrosine. The short motif at 222 to 226 (KIGKT) is the 'KMSKS' region element. Lysine 225 serves as a coordination point for ATP. Residues 345–412 (KRWIDLFVGV…KKKKLVLHLI (68 aa)) form the S4 RNA-binding domain.

Belongs to the class-I aminoacyl-tRNA synthetase family. TyrS type 1 subfamily. Homodimer.

It is found in the cytoplasm. The enzyme catalyses tRNA(Tyr) + L-tyrosine + ATP = L-tyrosyl-tRNA(Tyr) + AMP + diphosphate + H(+). Functionally, catalyzes the attachment of tyrosine to tRNA(Tyr) in a two-step reaction: tyrosine is first activated by ATP to form Tyr-AMP and then transferred to the acceptor end of tRNA(Tyr). In Chlamydia caviae (strain ATCC VR-813 / DSM 19441 / 03DC25 / GPIC) (Chlamydophila caviae), this protein is Tyrosine--tRNA ligase.